The following is a 411-amino-acid chain: Dual-specificity RNA methyltransferase RlmN (411 aa).

Catalysis depends on Glu124, which acts as the Proton acceptor. Residues 130–379 (EEGRGTLCIS…IRTPRGRDIL (250 aa)) form the Radical SAM core domain. Cys137 and Cys382 are oxidised to a cystine. Positions 144, 148, and 151 each coordinate [4Fe-4S] cluster. S-adenosyl-L-methionine is bound by residues 208–209 (GE), Ser240, 262–264 (SLH), and Asn339. The active-site S-methylcysteine intermediate is Cys382.

Belongs to the radical SAM superfamily. RlmN family. [4Fe-4S] cluster serves as cofactor.

The protein resides in the cytoplasm. The enzyme catalyses adenosine(2503) in 23S rRNA + 2 reduced [2Fe-2S]-[ferredoxin] + 2 S-adenosyl-L-methionine = 2-methyladenosine(2503) in 23S rRNA + 5'-deoxyadenosine + L-methionine + 2 oxidized [2Fe-2S]-[ferredoxin] + S-adenosyl-L-homocysteine. The catalysed reaction is adenosine(37) in tRNA + 2 reduced [2Fe-2S]-[ferredoxin] + 2 S-adenosyl-L-methionine = 2-methyladenosine(37) in tRNA + 5'-deoxyadenosine + L-methionine + 2 oxidized [2Fe-2S]-[ferredoxin] + S-adenosyl-L-homocysteine. Its function is as follows. Specifically methylates position 2 of adenine 2503 in 23S rRNA and position 2 of adenine 37 in tRNAs. m2A2503 modification seems to play a crucial role in the proofreading step occurring at the peptidyl transferase center and thus would serve to optimize ribosomal fidelity. The sequence is that of Dual-specificity RNA methyltransferase RlmN from Sinorhizobium fredii (strain NBRC 101917 / NGR234).